We begin with the raw amino-acid sequence, 178 residues long: MSKTGTKITFYEDKNFQGRRYDCDCDCADFHTYLSRCNSIKVEGGTWAVYERPNFAGYMYILPQGEYPEYQRWMGLNDRLSSCRAVHLPSGGQYKIQIFEKGDFSGQMYETTEDCPSIMEQFHMREIHSCKVLEGVWIFYELPNYRGRQYLLDKKEYRKPIDWGAASPAVQSFRRIVE.

S2 is modified (N-acetylserine). Residues 2 to 5 are N-terminal arm; sequence SKTG. Beta/gamma crystallin 'Greek key' domains are found at residues 6-44 and 45-87; these read TKIT…KVEG and GTWA…RAVH. The tract at residues 88-93 is connecting peptide; that stretch reads LPSGGQ. 2 consecutive Beta/gamma crystallin 'Greek key' domains span residues 94 to 134 and 135 to 177; these read YKIQ…KVLE and GVWI…RRIV.

The protein belongs to the beta/gamma-crystallin family. Monomer.

Functionally, crystallins are the dominant structural components of the vertebrate eye lens. This chain is Gamma-crystallin S (CRYGS), found in Homo sapiens (Human).